Consider the following 1405-residue polypeptide: DNA-directed RNA polymerase subunit beta' (1405 aa).

The Zn(2+) site is built by Cys-70, Cys-72, Cys-85, and Cys-88. 3 residues coordinate Mg(2+): Asp-460, Asp-462, and Asp-464. Residues Cys-815, Cys-890, Cys-897, and Cys-900 each coordinate Zn(2+).

Belongs to the RNA polymerase beta' chain family. As to quaternary structure, the RNAP catalytic core consists of 2 alpha, 1 beta, 1 beta' and 1 omega subunit. When a sigma factor is associated with the core the holoenzyme is formed, which can initiate transcription. The cofactor is Mg(2+). Requires Zn(2+) as cofactor.

The enzyme catalyses RNA(n) + a ribonucleoside 5'-triphosphate = RNA(n+1) + diphosphate. Its function is as follows. DNA-dependent RNA polymerase catalyzes the transcription of DNA into RNA using the four ribonucleoside triphosphates as substrates. The protein is DNA-directed RNA polymerase subunit beta' of Xanthomonas campestris pv. campestris (strain B100).